Reading from the N-terminus, the 440-residue chain is Ferreportin (440 aa).

Residues 1–8 are Cytoplasmic-facing; it reads MKVQSLLR. A helical membrane pass occupies residues 9 to 38; that stretch reads IETQLLLGRLLTRSGDQAWDFVVPFALLVI. Residue Asp24 coordinates Ca(2+). At 39–42 the chain is on the extracellular side; the sequence is FPGK. The helical transmembrane segment at 43–69 threads the bilayer; sequence LQVAAFYYLIVKIGTFLLTPSSGKWID. The Cytoplasmic segment spans residues 70 to 72; the sequence is THP. A helical membrane pass occupies residues 73–103; the sequence is RIQVVKWGVWLQFFAILAGMVFFGMLDGLVR. A Ca(2+)-binding site is contributed by Gln84. Residues 104 to 109 lie on the Extracellular side of the membrane; sequence AGGRES. Residues 110–145 form a helical membrane-spanning segment; that stretch reads WLLSVLFIALALSGVMASLGSQITDISVGNDLAPSL. Residues 146 to 147 are Cytoplasmic-facing; that stretch reads VA. A helical transmembrane segment spans residues 148–176; that stretch reads PEKLTHFNSWLRRIDLATEVGAPILAGAL. At 177–186 the chain is on the extracellular side; the sequence is FAFHPEQLPL. Residues 187–213 traverse the membrane as a helical segment; it reads AGLFLIGLWNLVSFVPEYFLLRNVIQR. Asn196 and Glu203 together coordinate Ca(2+). At 214–242 the chain is on the cytoplasmic side; that stretch reads SGLKIKVLTEAQSWKDTFHINLRGSFSDP. The chain crosses the membrane as a helical span at residues 243-271; it reads IFWLILSYALLWLSVLSPHGVLLAAYLKD. Residues 272-276 lie on the Extracellular side of the membrane; sequence EMRLP. Residues 277–304 traverse the membrane as a helical segment; the sequence is ETEIGLFRGLGAVFGLISTVSFPYLVRR. Residues 305–306 are Cytoplasmic-facing; it reads LG. A helical membrane pass occupies residues 307–329; sequence LISSSRWHLGFQGVTLGIAVTAF. Residues 330–335 are Extracellular-facing; it reads AMGSTA. Residues 336-365 traverse the membrane as a helical segment; that stretch reads SVYVFLGCILLSRVGLYGFSNGEFELRQRL. Residues 366–370 lie on the Cytoplasmic side of the membrane; it reads IPEGR. A helical transmembrane segment spans residues 371–395; the sequence is RGELNSLSSLTTTSATLILFSAGSL. The Extracellular portion of the chain corresponds to 396–398; it reads LPQ. Residues 399-424 traverse the membrane as a helical segment; it reads TEDFKYLVYVSLAAVLLANVVFIKWS. Topologically, residues 425-440 are cytoplasmic; it reads SRQGVVTSGAAEPVES.

This sequence belongs to the ferroportin (FP) (TC 2.A.100) family. It depends on Ca(2+) as a cofactor.

It is found in the cell membrane. Iron transpoter that exports Fe(2+) from the cell. Also binds to Co(2+) and Ni(2+). May act as a multivalent divalent metal transporter. The transporter is composed of 12 transmembrane (TM) helices organized into N-terminal (TM1-6) and C-terminal (TM7-12) domains. The substrate-binding site is formed at the interface of the two domains and is alternately accessible from either side of the membrane. The transport cycle is viewed as a series of ligand-induced conformational changes that include open outward and open inward states. The chain is Ferreportin (slc39) from Bdellovibrio bacteriovorus (strain ATCC 15356 / DSM 50701 / NCIMB 9529 / HD100).